A 257-amino-acid polypeptide reads, in one-letter code: Glutamate racemase (257 aa).

Substrate is bound by residues 12-13 (DS) and 44-45 (YG). Cys-75 functions as the Proton donor/acceptor in the catalytic mechanism. A substrate-binding site is contributed by 76-77 (NT). Cys-176 (proton donor/acceptor) is an active-site residue. Residue 177 to 178 (TH) participates in substrate binding.

It belongs to the aspartate/glutamate racemases family.

The catalysed reaction is L-glutamate = D-glutamate. Its pathway is cell wall biogenesis; peptidoglycan biosynthesis. Provides the (R)-glutamate required for cell wall biosynthesis. The sequence is that of Glutamate racemase from Thermus thermophilus (strain ATCC BAA-163 / DSM 7039 / HB27).